Reading from the N-terminus, the 599-residue chain is Crinkler effector protein 8 (599 aa).

The N-terminal stretch at 1 to 17 is a signal peptide; sequence MVTLFCAVVGVAGSTFP. The interval 18-52 is LQLFLAK domain; it reads VDINENKSVGHLKKAIKEEKMYQFPADELQLFLAK. N23 carries N-linked (GlcNAc...) asparagine glycosylation. The interval 53-109 is DWL domain; the sequence is AGGNAWLSSLTEDVKKLKKGEKTALVKSLTQEEKELQGEDPISECLEGMDPPKVKQI. An HVLVXXP motif motif is present at residues 110-116; it reads HVLVALP. Residues 117–590 form a C-terminal D2 effector domain region; that stretch reads PGTSSAPISD…EAAEQESQGK (474 aa). Residues S249, S281, and S385 each carry the phosphoserine modification. Residues 289–590 form the Protein kinase domain; sequence LSKKLVWSYG…EAAEQESQGK (302 aa). D470 serves as the catalytic Proton acceptor. Residues S474 and S587 each carry the phosphoserine modification. Residues 577-599 are disordered; that stretch reads RFEREAAEQESQGKGVRKKHRRA. Residues 590–599 carry the Host nuclear localization signal motif; sequence KGVRKKHRRA.

In the N-terminal section; belongs to the Crinkler effector family. The protein in the C-terminal section; belongs to the protein kinase superfamily. In terms of assembly, dimerizes in host plants. Post-translationally, autophosphorylated at Ser-249, Ser-281, Ser-385, Ser-474 and Ser-587. Additional serines or threonines are also targeted for phosphorylation.

The protein localises to the secreted. The protein resides in the host nucleus. The enzyme catalyses L-seryl-[protein] + ATP = O-phospho-L-seryl-[protein] + ADP + H(+). It carries out the reaction L-threonyl-[protein] + ATP = O-phospho-L-threonyl-[protein] + ADP + H(+). Functionally, secreted effector that induces cell death when expressed in host plants. Acts as a kinase and is able to autophosphorylate, however its cell death inducing ability is not a direct result of its kinase activity, but rather a consequence of the phosphorylated state of the five identified serine residues in the CRN8 protein. The protein is Crinkler effector protein 8 of Phytophthora infestans (Potato late blight agent).